Reading from the N-terminus, the 209-residue chain is MTKGILGRKVGMTQVFTENGELIPVTVIEAAQNVVLQKKTVETDGYEAVQIGFEDKRAILSNKPEQGHVAKANTTPKRFIREFRDVNLDEYEIGAEVKVDVFAEGDIIDATGVSKGKGFQGVIKRHGQSRGPMAHGSRYHRRPGSMGPVAPNRVFKNKLLPGRMGGEQITIQNLEIVKVDVEKNVLLVKGNVPGAKKALVQIKTATKAK.

Residues 126 to 148 are disordered; the sequence is HGQSRGPMAHGSRYHRRPGSMGP.

This sequence belongs to the universal ribosomal protein uL3 family. In terms of assembly, part of the 50S ribosomal subunit. Forms a cluster with proteins L14 and L19.

Functionally, one of the primary rRNA binding proteins, it binds directly near the 3'-end of the 23S rRNA, where it nucleates assembly of the 50S subunit. The chain is Large ribosomal subunit protein uL3 from Listeria monocytogenes serotype 4b (strain CLIP80459).